Consider the following 228-residue polypeptide: Prolactin (228 aa).

Residues 1–29 (MCPKGSSVKGSLLLLLLMSSRFLFKAVES) form the signal peptide. A disulfide bond links cysteine 33 and cysteine 40. Serine 55, serine 63, and serine 119 each carry phosphoserine. 2 cysteine pairs are disulfide-bonded: cysteine 87–cysteine 203 and cysteine 220–cysteine 228.

It belongs to the somatotropin/prolactin family. Interacts with PRLR.

The protein localises to the secreted. In terms of biological role, prolactin acts primarily on the mammary gland by promoting lactation. The protein is Prolactin (PRL) of Monodelphis domestica (Gray short-tailed opossum).